An 843-amino-acid chain; its full sequence is Receptor-like serine/threonine-protein kinase SD1-7 (843 aa).

The first 31 residues, 1–31 (MRSVPNYHHSFFIFLILILFLAFSVSPNTLS), serve as a signal peptide directing secretion. Residues 32-151 (ATESLTISSN…NNRLLWQSFD (120 aa)) form the Bulb-type lectin domain. Residues 32–435 (ATESLTISSN…LEDKRIKNEK (404 aa)) lie on the Extracellular side of the membrane. N-linked (GlcNAc...) asparagine glycans are attached at residues N41, N92, N116, N236, and N251. An EGF-like; atypical domain is found at 286-322 (PKDLCDNYKVCGNFGYCDSNSLPNCYCIKGFKPVNEQ). Cystine bridges form between C290/C302, C296/C310, C372/C397, and C376/C382. The region spanning 341-422 (CDGRDGFTRL…GGQDLYVRLA (82 aa)) is the PAN domain. N-linked (GlcNAc...) asparagine glycosylation occurs at N381. Residues 436–456 (IIGSSIGVSILLLLSFVIFHF) form a helical membrane-spanning segment. At 457-843 (WKRKQKRSIT…QITLSVIDAR (387 aa)) the chain is on the cytoplasmic side. The region spanning 519-809 (FSNDNKLGQG…AIPQPKRPGF (291 aa)) is the Protein kinase domain. ATP contacts are provided by residues 525 to 533 (LGQGGFGIV) and K547. S553 carries the post-translational modification Phosphoserine. Residues 608 to 625 (TRSSNLNWQKRFDIINGI) are caM-binding. D644 acts as the Proton acceptor in catalysis. A phosphoserine mark is found at S648 and S661. T678 is modified (phosphothreonine). S820 is subject to Phosphoserine.

This sequence belongs to the protein kinase superfamily. Ser/Thr protein kinase family. As to quaternary structure, interacts with PUB9, PUB13, PUB14 and PUB38. Autophosphorylated on serine and threonine residues. Mostly expressed in leaves, and, to a lower extent, in stems and flower buds.

The protein localises to the cell membrane. The catalysed reaction is L-seryl-[protein] + ATP = O-phospho-L-seryl-[protein] + ADP + H(+). It carries out the reaction L-threonyl-[protein] + ATP = O-phospho-L-threonyl-[protein] + ADP + H(+). Its function is as follows. Involved in the regulation of cellular expansion and differentiation. Mediates subcellular relocalization of PUB9 from nucleus to plasma membrane in a protein-phosphorylation-dependent manner. May be involved in the abscisic acid-mediated signaling pathway, at least during germination. This Arabidopsis thaliana (Mouse-ear cress) protein is Receptor-like serine/threonine-protein kinase SD1-7 (SD17).